The primary structure comprises 209 residues: Large ribosomal subunit protein uL3 (209 aa).

Residues 141–163 (RAVGSMGASSDPSRTFKNKRMPG) are disordered.

It belongs to the universal ribosomal protein uL3 family. Part of the 50S ribosomal subunit. Forms a cluster with proteins L14 and L19.

Functionally, one of the primary rRNA binding proteins, it binds directly near the 3'-end of the 23S rRNA, where it nucleates assembly of the 50S subunit. This is Large ribosomal subunit protein uL3 from Clostridium botulinum (strain Langeland / NCTC 10281 / Type F).